Reading from the N-terminus, the 291-residue chain is Orotidine 5'-phosphate decarboxylase (291 aa).

Lys-97 serves as the catalytic Proton donor.

Belongs to the OMP decarboxylase family. Type 2 subfamily.

The enzyme catalyses orotidine 5'-phosphate + H(+) = UMP + CO2. The protein operates within pyrimidine metabolism; UMP biosynthesis via de novo pathway; UMP from orotate: step 2/2. This chain is Orotidine 5'-phosphate decarboxylase, found in Clostridium kluyveri (strain ATCC 8527 / DSM 555 / NBRC 12016 / NCIMB 10680 / K1).